Consider the following 172-residue polypeptide: uncharacterized protein (172 aa).

This is an uncharacterized protein from Bacillus subtilis (strain 168).